We begin with the raw amino-acid sequence, 212 residues long: Protein Rv0786c (212 aa).

The protein is Protein Rv0786c of Mycobacterium tuberculosis (strain ATCC 25618 / H37Rv).